A 288-amino-acid polypeptide reads, in one-letter code: uncharacterized protein (288 aa).

NAD(+) contacts are provided by residues 6–20 (GFIG…MASH) and threonine 97. The active site involves lysine 172. An NAD(+)-binding site is contributed by lysine 240.

It belongs to the HIBADH-related family.

The protein resides in the cell membrane. It is found in the membrane raft. This is an uncharacterized protein from Bacillus subtilis (strain 168).